Reading from the N-terminus, the 148-residue chain is MKALIILGLVLLSVTVQGKIFERCELARTLKKLGLDGYKGVSLANWVCLAKWESGYNTEATNYNPGDESTDYGIFQINSRYWCNNGKTPGAVDACHISCSALLQNNIADAVACAKRVVSDPQGIRAWVAWRNHCQNRDVSQYVKGCGV.

An N-terminal signal peptide occupies residues 1–18 (MKALIILGLVLLSVTVQG). The C-type lysozyme domain occupies 19–148 (KIFERCELAR…VSQYVKGCGV (130 aa)). Disulfide bonds link cysteine 24/cysteine 146, cysteine 48/cysteine 134, cysteine 83/cysteine 99, and cysteine 95/cysteine 113. Catalysis depends on residues glutamate 53 and aspartate 71.

This sequence belongs to the glycosyl hydrolase 22 family. Monomer.

It is found in the secreted. It catalyses the reaction Hydrolysis of (1-&gt;4)-beta-linkages between N-acetylmuramic acid and N-acetyl-D-glucosamine residues in a peptidoglycan and between N-acetyl-D-glucosamine residues in chitodextrins.. In terms of biological role, lysozymes have primarily a bacteriolytic function; those in tissues and body fluids are associated with the monocyte-macrophage system and enhance the activity of immunoagents. This Nasalis larvatus (Proboscis monkey) protein is Lysozyme C (LYZ).